A 1248-amino-acid polypeptide reads, in one-letter code: ATP-dependent helicase/nuclease subunit A (1248 aa).

A UvrD-like helicase ATP-binding domain is found at 4-480 (TKWTKEQYAA…ILLFKNFRSR (477 aa)). 25 to 32 (AAAGAGKT) lines the ATP pocket. The UvrD-like helicase C-terminal domain maps to 523-820 (ETVVGGAIEL…RLMSIHKSKG (298 aa)).

Belongs to the helicase family. AddA subfamily. As to quaternary structure, heterodimer of AddA and AddB/RexB. Mg(2+) serves as cofactor.

The enzyme catalyses Couples ATP hydrolysis with the unwinding of duplex DNA by translocating in the 3'-5' direction.. It catalyses the reaction ATP + H2O = ADP + phosphate + H(+). Its function is as follows. The heterodimer acts as both an ATP-dependent DNA helicase and an ATP-dependent, dual-direction single-stranded exonuclease. Recognizes the chi site generating a DNA molecule suitable for the initiation of homologous recombination. The AddA nuclease domain is required for chi fragment generation; this subunit has the helicase and 3' -&gt; 5' nuclease activities. In Ruminiclostridium cellulolyticum (strain ATCC 35319 / DSM 5812 / JCM 6584 / H10) (Clostridium cellulolyticum), this protein is ATP-dependent helicase/nuclease subunit A.